Here is a 182-residue protein sequence, read N- to C-terminus: Large ribosomal subunit protein uL5c (182 aa).

This sequence belongs to the universal ribosomal protein uL5 family. In terms of assembly, part of the 50S ribosomal subunit; contacts the 5S rRNA.

The protein localises to the plastid. It is found in the chloroplast. Binds 5S rRNA, forms part of the central protuberance of the 50S subunit. The polypeptide is Large ribosomal subunit protein uL5c (rpl5) (Emiliania huxleyi (Coccolithophore)).